Reading from the N-terminus, the 544-residue chain is Neurofilament light polypeptide (544 aa).

Serine 2 carries the post-translational modification N-acetylserine. Residues 2-87 are head; it reads SSYSYDPYYT…KIVRTQEKVQ (86 aa). The IF rod domain occupies 84-394; sequence EKVQLQDLND…KLLEGEETRL (311 aa). The tract at residues 88 to 119 is coil 1A; that stretch reads LQDLNDRFANFIERVHELEQRNKVLEAELLLL. Positions 120–132 are linker 1; that stretch reads RQKHNEPSRLRDM. The coil 1B stretch occupies residues 133–228; the sequence is YEKEVRDVRL…KVHEEELSQL (96 aa). A linker 12 region spans residues 229–246; the sequence is QSQVQYAQVSLEVEVAKP. Residues 247 to 265 are coil 2A; that stretch reads DLSSALRDIRGQYEKLAAK. The linker 2 stretch occupies residues 266–274; sequence NMQSAEEWF. Positions 275 to 390 are coil 2B; sequence KSRFTVLTQS…AAYRKLLEGE (116 aa). The interval 391 to 435 is tail, subdomain A; the sequence is ETRLSFSGVGAITSGYTQSAPVFGRSAYSLQSSSYMTSRAFPTYY. The tract at residues 391 to 544 is tail; it reads ETRLSFSGVG…EESEKKEKKK (154 aa). Residues 436-544 form a tail, subdomain B (acidic) region; it reads SSHVQEEQLD…EESEKKEKKK (109 aa). The tract at residues 450–544 is disordered; it reads IESSRAEEAK…EESEKKEKKK (95 aa). Positions 451–462 are enriched in basic and acidic residues; the sequence is ESSRAEEAKAEA. A compositionally biased stretch (acidic residues) spans 463-525; the sequence is PEEEEEEAAE…EAEGDGEEEG (63 aa). The span at 526-544 shows a compositional bias: basic and acidic residues; sequence ESKGDEAAEEESEKKEKKK.

Belongs to the intermediate filament family. As to quaternary structure, forms homodimers (in vitro).

It localises to the cell projection. The protein resides in the axon. The protein localises to the cytoplasm. It is found in the cytoskeleton. Neurofilaments usually contain three intermediate filament proteins: NEFL, NEFM, and NEFH which are involved in the maintenance of neuronal caliber. May additionally cooperate with other neuronal intermediate filament proteins to form neuronal filamentous networks. This is Neurofilament light polypeptide (nefl) from Xenopus laevis (African clawed frog).